Consider the following 1104-residue polypeptide: Extended synaptotagmin-1 (1104 aa).

Met-1 carries the post-translational modification N-acetylmethionine. The Cytoplasmic portion of the chain corresponds to 1–38 (MERSPGEGPSPSPTDQPSAPSDPTGQPPAAHAKPDPGS). Positions 1–47 (MERSPGEGPSPSPTDQPSAPSDPTGQPPAAHAKPDPGSGGQPAGPGA) are disordered. The segment covering 15–24 (DQPSAPSDPT) has biased composition (polar residues). Gly residues predominate over residues 37–47 (GSGGQPAGPGA). The chain crosses the membrane as a helical span at residues 39–59 (GGQPAGPGAAGEALAVLTSFG). The Lumenal segment spans residues 60–62 (KRL). A helical transmembrane segment spans residues 63-83 (LVLIPVYLAGAVGLSVGFVLF). The Cytoplasmic portion of the chain corresponds to 84–1104 (GLALYLGWRR…LMDDKDKGSS (1021 aa)). The stretch at 91–116 (WRRVRDEKERSLRAARQLLDDEEQLT) forms a coiled coil. An SMP-LTD domain is found at 135–313 (DVEKAEWLNK…LPNRLLVPLV (179 aa)). 4 C2 domains span residues 312-433 (LVPD…DDWF), 460-580 (QVLQ…QLSS), 627-751 (SVDA…DEWL), and 777-899 (LEEV…TLNS). Residue Ser-324 is modified to Phosphoserine; by CDK5. Residues Lys-344, Asp-345, Asp-357, Asp-404, Asp-406, Asp-408, Asp-410, and Asp-411 each coordinate Ca(2+). 3 disordered regions span residues 617 to 641 (VDSE…TPDS), 813 to 833 (RKGT…TSHK), and 924 to 950 (SHSY…VTSS). Lys-817 is modified (N6-acetyllysine). A phosphoserine mark is found at Ser-820 and Ser-941. Positions 925–946 (HSYSHSSSSLSEEPELSGGPPH) are enriched in low complexity. Thr-948 is subject to Phosphothreonine. Phosphoserine occurs at positions 949 and 963. The C2 5 domain maps to 971–1093 (PLGQVKLTVW…DLSQGVARWY (123 aa)). Tyr-1009 carries the post-translational modification Phosphotyrosine. The interval 1018–1025 (KNRGTKRK) is required for phosphatidylinositol 4,5-bisphosphate-dependent location at the cell membrane. Ser-1034 carries the post-translational modification Phosphoserine.

The protein belongs to the extended synaptotagmin family. As to quaternary structure, interacts with ESYT2 and ESYT3. Interacts with ADGRD1; inhibiting the G-protein-coupled receptor activity of ADGRD1. Interaction with ADGRD1 is abolished when cytosolic calcium increases, relieving ADGRD1 G-protein-coupled receptor activity. Interacts (phosphorylated form) with SLC2A4. In terms of processing, phosphorylated on Ser residues in insulin-treated adipocytes (in vitro); this promotes interaction with SLC2A4.

Its subcellular location is the endoplasmic reticulum membrane. It is found in the cell membrane. Its function is as follows. Binds calcium (via the C2 domains) and translocates to sites of contact between the endoplasmic reticulum and the cell membrane in response to increased cytosolic calcium levels. Helps tether the endoplasmic reticulum to the cell membrane and promotes the formation of appositions between the endoplasmic reticulum and the cell membrane. Acts as an inhibitor of ADGRD1 G-protein-coupled receptor activity in absence of cytosolic calcium. Binds glycerophospholipids in a barrel-like domain and may play a role in cellular lipid transport. This is Extended synaptotagmin-1 (ESYT1) from Pongo abelii (Sumatran orangutan).